Here is a 660-residue protein sequence, read N- to C-terminus: DNA mismatch repair protein MutL (660 aa).

Residues 414–433 (SSVKHASRPQNTFTETDHPN) form a disordered region.

This sequence belongs to the DNA mismatch repair MutL/HexB family.

This protein is involved in the repair of mismatches in DNA. It is required for dam-dependent methyl-directed DNA mismatch repair. May act as a 'molecular matchmaker', a protein that promotes the formation of a stable complex between two or more DNA-binding proteins in an ATP-dependent manner without itself being part of a final effector complex. This Streptococcus pyogenes serotype M5 (strain Manfredo) protein is DNA mismatch repair protein MutL.